A 144-amino-acid chain; its full sequence is MADDDYNEVDDLGYEDEPAEPEIEEGVEEDADIKENDDVNVDPLETEDKVETEPVQRPRKTSKFMTKYERARILGTRALQISMNAPVMVELEGETDPLEIAMKELRQRKIPFTIRRYLPDMSYEEWGVDELIVEDSWKRQVGGD.

Acidic residues predominate over residues 1–32 (MADDDYNEVDDLGYEDEPAEPEIEEGVEEDAD). The disordered stretch occupies residues 1 to 62 (MADDDYNEVD…EPVQRPRKTS (62 aa)). Residues 46–56 (TEDKVETEPVQ) show a composition bias toward basic and acidic residues.

This sequence belongs to the archaeal Rpo6/eukaryotic RPB6 RNA polymerase subunit family. Component of the RNA polymerase II and V complexes.

The protein resides in the nucleus. Its function is as follows. DNA-dependent RNA polymerase catalyzes the transcription of DNA into RNA using the four ribonucleoside triphosphates as substrates. Component of RNA polymerase II which synthesizes mRNA precursors and many functional non-coding RNAs. Pol II is the central component of the basal RNA polymerase II transcription machinery. It is composed of mobile elements that move relative to each other. Component of RNA polymerase V which mediates RNA-directed DNA methylation-dependent (RdDM) transcriptional gene silencing (TGS) of endogenous repeated sequences, including transposable elements. The polypeptide is DNA-directed RNA polymerases II and V subunit 6B (NRPB6B) (Arabidopsis thaliana (Mouse-ear cress)).